We begin with the raw amino-acid sequence, 210 residues long: Glutathione S-transferase P (210 aa).

The GST N-terminal domain occupies P2–G81. Y4 carries the post-translational modification Phosphotyrosine; by EGFR. Glutathione is bound by residues Y8, R14, W39, K45, and Q52–L53. T62 is modified (phosphothreonine). Q65–S66 is a glutathione binding site. The 122-residue stretch at D83–I204 folds into the GST C-terminal domain. 2 positions are modified to N6-succinyllysine: K103 and K116. At K128 the chain carries N6-acetyllysine. Position 199 is a phosphotyrosine; by EGFR (Y199).

Belongs to the GST superfamily. Pi family. Homodimer. Interacts with CDK5.

The protein resides in the cytoplasm. The protein localises to the mitochondrion. It localises to the nucleus. The catalysed reaction is RX + glutathione = an S-substituted glutathione + a halide anion + H(+). It carries out the reaction prostaglandin J2 + glutathione = prostaglandin J2-S-(R)-glutathione. It catalyses the reaction prostaglandin J2 + glutathione = prostaglandin J2-S-(S)-glutathione. The enzyme catalyses prostaglandin A2 + glutathione = prostaglandin A2-S-(S)-glutathione. The catalysed reaction is 11(S)-hydroxy-14(S),15(S)-epoxy-(5Z,8Z,12E)-eicosatrienoate + glutathione = (11S,15S)-dihydroxy-14(R)-S-glutathionyl-(5Z,8Z,12E)-eicosatrienoate. Functionally, conjugation of reduced glutathione to a wide number of exogenous and endogenous hydrophobic electrophiles. Involved in the formation of glutathione conjugates of both prostaglandin A2 (PGA2) and prostaglandin J2 (PGJ2). Participates in the formation of novel hepoxilin regioisomers. Negatively regulates CDK5 activity via p25/p35 translocation to prevent neurodegeneration. The sequence is that of Glutathione S-transferase P from Homo sapiens (Human).